The primary structure comprises 4450 residues: Gramicidin S synthase 2 (4450 aa).

The domain 1 (proline-activating) stretch occupies residues D467–G1044. 4 Carrier domains span residues V971 to K1046, A2006 to E2081, A3051 to D3126, and A4089 to E4164. S1006, S2041, S3086, and S4124 each carry O-(pantetheine 4'-phosphoryl)serine. Residues D1521–G2080 form a domain 2 (valine-activating) region. The tract at residues Y2538–Q3134 is domain 3 (ornithine-activating). The tract at residues I3590–P4172 is domain 4 (leucine-activating).

It belongs to the ATP-dependent AMP-binding enzyme family. Large multienzyme complex of GrsA and GrsB. The cofactor is pantetheine 4'-phosphate.

It functions in the pathway antibiotic biosynthesis; gramicidin S biosynthesis. Functionally, this protein is a multifunctional enzyme, able to activate and polymerize the amino acids Pro, Val, Orn and Leu. Activation sites for these AA consist of individual domains. This Brevibacillus brevis (Bacillus brevis) protein is Gramicidin S synthase 2 (grsB).